Reading from the N-terminus, the 325-residue chain is SAM pointed domain-containing Ets transcription factor (325 aa).

Disordered stretches follow at residues 27–50 (GTEKAASGAMGPEKQEWSPSPPAT) and 79–100 (ARAGEDHPEEPEQCPVIDSQAS). A PNT domain is found at 119 to 203 (EVLKDIETAC…AHLDIWKSAA (85 aa)). Residues 239–322 (IHLWQFLKEL…ISQRLVYQFV (84 aa)) constitute a DNA-binding region (ETS).

It belongs to the ETS family. In terms of assembly, interacts with the DNA-binding domain of the androgen receptor. Interacts with NKX3-1. In terms of tissue distribution, expressed in the accessory glands of sex organs including the prostate, seminal vesicle, coagulating gland in males, the oviduct in females, and in intestines. Expression is epithelial-specific.

Its subcellular location is the nucleus. Its function is as follows. May function as an androgen-independent transactivator of the prostate-specific antigen (PSA) promoter. Binds to 5'-GGAT-3' DNA sequences. May play a role in the regulation of the prostate gland and/or prostate cancer development. Acts as a transcriptional activator for SERPINB5 promoter. This chain is SAM pointed domain-containing Ets transcription factor (Spdef), found in Mus musculus (Mouse).